Reading from the N-terminus, the 563-residue chain is Arginine--tRNA ligase (563 aa).

Residues 121-131 (PNIAKPFSIGH) carry the 'HIGH' region motif.

It belongs to the class-I aminoacyl-tRNA synthetase family. Monomer.

The protein resides in the cytoplasm. It carries out the reaction tRNA(Arg) + L-arginine + ATP = L-arginyl-tRNA(Arg) + AMP + diphosphate. In Streptococcus pyogenes serotype M3 (strain ATCC BAA-595 / MGAS315), this protein is Arginine--tRNA ligase.